The primary structure comprises 126 residues: Holo-[acyl-carrier-protein] synthase (126 aa).

Mg(2+)-binding residues include aspartate 9 and glutamate 58.

This sequence belongs to the P-Pant transferase superfamily. AcpS family. Mg(2+) serves as cofactor.

It localises to the cytoplasm. It carries out the reaction apo-[ACP] + CoA = holo-[ACP] + adenosine 3',5'-bisphosphate + H(+). Functionally, transfers the 4'-phosphopantetheine moiety from coenzyme A to a Ser of acyl-carrier-protein. This chain is Holo-[acyl-carrier-protein] synthase, found in Photorhabdus laumondii subsp. laumondii (strain DSM 15139 / CIP 105565 / TT01) (Photorhabdus luminescens subsp. laumondii).